Here is a 165-residue protein sequence, read N- to C-terminus: LIM domain transcription factor LMO4 (165 aa).

2 consecutive LIM zinc-binding domains span residues 23 to 83 (CAGC…LFGN) and 87 to 147 (CSAC…ALIN).

As to quaternary structure, interacts strongly with LDBS. Interacts with LDB2 and LDB1. Interaction with complexes consisting of at least LDB1 and LHX3 acts to disassemble the complex; may preferentially disassemble LDB1-LHX3 complexes rather than complexes consisting of LDB1, LHX3 and ISL1. Interacts (via the LIM zinc-binding domain 1) with RBBP8. Interacts with both RPPB8 and LDB1 through the same face and cannot bind to both proteins simultaneously. Interacts with BRCA1 (via the BRCT domains); the interaction represses BRCA1 transcriptional activity. Interacts with DEAF1; LMO4 blocks export from nucleus.

Functionally, transcription cofactor. Plays a role in establishing motor neuron identity, in concert with MNX1, acting, at least in part, to disrupt LDB1-LHX3 complexes thereby negatively modulating interneuron genes in motor neurons. This Bos taurus (Bovine) protein is LIM domain transcription factor LMO4 (LMO4).